Reading from the N-terminus, the 295-residue chain is Ankyrin repeat and SOCS box protein 17 (295 aa).

An ANK repeat occupies 146 to 176 (SGITPLFYVAQTRQSNIFKILLQYGILEREK). Positions 232 to 295 (LGRRPIISNW…RLQNYLNLEI (64 aa)) constitute an SOCS box domain.

Belongs to the ankyrin SOCS box (ASB) family.

It participates in protein modification; protein ubiquitination. Its function is as follows. May be a substrate-recognition component of a SCF-like ECS (Elongin-Cullin-SOCS-box protein) E3 ubiquitin-protein ligase complex which mediates the ubiquitination and subsequent proteasomal degradation of target proteins. This is Ankyrin repeat and SOCS box protein 17 (ASB17) from Macaca fascicularis (Crab-eating macaque).